We begin with the raw amino-acid sequence, 156 residues long: dCTP deaminase (156 aa).

Residues 79 to 84 (RSSLAR), Asp95, Gln124, and Tyr138 each bind dCTP.

Belongs to the dCTP deaminase family. As to quaternary structure, homotrimer.

The catalysed reaction is dCTP + H2O + H(+) = dUTP + NH4(+). It participates in pyrimidine metabolism; dUMP biosynthesis; dUMP from dCTP (dUTP route): step 1/2. Catalyzes the deamination of dCTP to dUTP. The polypeptide is dCTP deaminase (Pyrococcus furiosus (strain ATCC 43587 / DSM 3638 / JCM 8422 / Vc1)).